The sequence spans 139 residues: Transcription antitermination protein NusB (139 aa).

It belongs to the NusB family.

Functionally, involved in transcription antitermination. Required for transcription of ribosomal RNA (rRNA) genes. Binds specifically to the boxA antiterminator sequence of the ribosomal RNA (rrn) operons. The sequence is that of Transcription antitermination protein NusB from Escherichia coli (strain K12 / MC4100 / BW2952).